We begin with the raw amino-acid sequence, 436 residues long: GTPase Der (436 aa).

2 EngA-type G domains span residues 4–167 (PVIA…PKIE) and 176–351 (IRFS…ESHS). GTP-binding positions include 10 to 17 (GRPNVGKS), 57 to 61 (DTGGI), 119 to 122 (NKVD), 182 to 189 (GRPNVGKS), 229 to 233 (DTAGM), and 294 to 297 (NKWD). Residues 352–436 (IRVQTNVLND…PIHIIARARD (85 aa)) enclose the KH-like domain.

Belongs to the TRAFAC class TrmE-Era-EngA-EngB-Septin-like GTPase superfamily. EngA (Der) GTPase family. In terms of assembly, associates with the 50S ribosomal subunit.

In terms of biological role, GTPase that plays an essential role in the late steps of ribosome biogenesis. The sequence is that of GTPase Der from Bacillus cereus (strain G9842).